We begin with the raw amino-acid sequence, 101 residues long: Small ribosomal subunit protein uS14 (101 aa).

The protein belongs to the universal ribosomal protein uS14 family. In terms of assembly, part of the 30S ribosomal subunit. Contacts proteins S3 and S10.

In terms of biological role, binds 16S rRNA, required for the assembly of 30S particles and may also be responsible for determining the conformation of the 16S rRNA at the A site. The sequence is that of Small ribosomal subunit protein uS14 from Marinobacter nauticus (strain ATCC 700491 / DSM 11845 / VT8) (Marinobacter aquaeolei).